The following is a 530-amino-acid chain: Autoinducer-2 kinase (530 aa).

It belongs to the FGGY kinase family.

Its subcellular location is the cytoplasm. It catalyses the reaction (S)-4,5-dihydroxypentane-2,3-dione + ATP = (2S)-2-hydroxy-3,4-dioxopentyl phosphate + ADP + H(+). Its function is as follows. Catalyzes the phosphorylation of autoinducer-2 (AI-2) to phospho-AI-2, which subsequently inactivates the transcriptional regulator LsrR and leads to the transcription of the lsr operon. Phosphorylates the ring-open form of (S)-4,5-dihydroxypentane-2,3-dione (DPD), which is the precursor to all AI-2 signaling molecules, at the C5 position. The sequence is that of Autoinducer-2 kinase from Escherichia coli (strain K12 / DH10B).